Here is a 268-residue protein sequence, read N- to C-terminus: MRGFLLLSLGVFSFSALAADLPGSHDLDILPRFPRAEIVDFRQAPSEERIYPLGAISRISGRLRMEGEVRAEGELTALTYRLPPEHSSQEAFAAARTALLKADATPLFWCERRDCGSSSLLANAVFGNAKLYGPDEQQAYLLVRLAAPQENSLVAVYSITRGNRRAYLQAEELKADAPLAELLPSPATLLRLLKANGELTLSHVPAEPAGSWLELLVRTLRLDTGVRVELSGKHAQEWRDALRGQGVLNSRMELGQSEVEGLHLNWLR.

A signal peptide spans 1 to 18; it reads MRGFLLLSLGVFSFSALA. Domain stretches follow at residues 24-184 and 185-268; these read SHDL…ELLP and SPAT…NWLR. Cys-110 and Cys-115 form a disulfide bridge.

In terms of assembly, monomer.

The protein localises to the periplasm. This is an uncharacterized protein from Pseudomonas aeruginosa (strain ATCC 15692 / DSM 22644 / CIP 104116 / JCM 14847 / LMG 12228 / 1C / PRS 101 / PAO1).